Here is a 241-residue protein sequence, read N- to C-terminus: Ubiquinone biosynthesis O-methyltransferase (241 aa).

Residues Arg-46, Gly-66, Asp-87, and Met-131 each coordinate S-adenosyl-L-methionine.

It belongs to the methyltransferase superfamily. UbiG/COQ3 family.

It catalyses the reaction a 3-demethylubiquinol + S-adenosyl-L-methionine = a ubiquinol + S-adenosyl-L-homocysteine + H(+). It carries out the reaction a 3-(all-trans-polyprenyl)benzene-1,2-diol + S-adenosyl-L-methionine = a 2-methoxy-6-(all-trans-polyprenyl)phenol + S-adenosyl-L-homocysteine + H(+). It functions in the pathway cofactor biosynthesis; ubiquinone biosynthesis. O-methyltransferase that catalyzes the 2 O-methylation steps in the ubiquinone biosynthetic pathway. This chain is Ubiquinone biosynthesis O-methyltransferase, found in Bordetella bronchiseptica (strain ATCC BAA-588 / NCTC 13252 / RB50) (Alcaligenes bronchisepticus).